Here is a 268-residue protein sequence, read N- to C-terminus: MDFFNLLEAAFLGLIEGLTEFIPVSSTGHLLLIGHFLGFESTGKTFEVLIQLGAILAILSVYSAKLARIATDFPRDARTRRFVLGVLVAFLPAAVIGALAHGFIKGVLFETPMLVCIMLIVGGFILLWVDQLNLRPRYHNVMDYPLPICLAIGFIQCLAMIPGVSRSGSTIVGSLLLGADKRSAAEFSFFLAMPTMAGAFAYDLFKSRNILSFNDGALIVVGFIMAFISGVFVVRHLLDYVSRHGFALFGWWRLIVGSAGMAALIIWG.

8 helical membrane-spanning segments follow: residues 3–23 (FFNL…EFIP), 46–66 (FEVL…SAKL), 84–104 (LGVL…HGFI), 107–127 (VLFE…FILL), 144–164 (YPLP…IPGV), 185–205 (AEFS…YDLF), 213–233 (FNDG…GVFV), and 246–266 (FALF…ALII).

This sequence belongs to the UppP family.

The protein resides in the cell inner membrane. The catalysed reaction is di-trans,octa-cis-undecaprenyl diphosphate + H2O = di-trans,octa-cis-undecaprenyl phosphate + phosphate + H(+). Its function is as follows. Catalyzes the dephosphorylation of undecaprenyl diphosphate (UPP). Confers resistance to bacitracin. The chain is Undecaprenyl-diphosphatase from Brucella abortus (strain S19).